The following is a 567-amino-acid chain: Oxygen-dependent choline dehydrogenase (567 aa).

Position 6 to 35 (6 to 35 (DYIIVGAGSAGNTLATRLTEDEGVTVLLLE)) interacts with FAD. Histidine 475 serves as the catalytic Proton acceptor.

It belongs to the GMC oxidoreductase family. FAD is required as a cofactor.

The catalysed reaction is choline + A = betaine aldehyde + AH2. It carries out the reaction betaine aldehyde + NAD(+) + H2O = glycine betaine + NADH + 2 H(+). The protein operates within amine and polyamine biosynthesis; betaine biosynthesis via choline pathway; betaine aldehyde from choline (cytochrome c reductase route): step 1/1. Involved in the biosynthesis of the osmoprotectant glycine betaine. Catalyzes the oxidation of choline to betaine aldehyde and betaine aldehyde to glycine betaine at the same rate. The sequence is that of Oxygen-dependent choline dehydrogenase from Pseudomonas fluorescens (strain Pf0-1).